Here is a 288-residue protein sequence, read N- to C-terminus: Acetyl-coenzyme A carboxylase carboxyl transferase subunit beta (288 aa).

Residues 34 to 288 enclose the CoA carboxyltransferase N-terminal domain; the sequence is LFAKCPACKH…HLVAFHGGVS (255 aa). The Zn(2+) site is built by Cys-38, Cys-41, Cys-56, and Cys-59. A C4-type zinc finger spans residues 38–59; that stretch reads CPACKHMIYQKDLGPAKICPTC.

Belongs to the AccD/PCCB family. As to quaternary structure, acetyl-CoA carboxylase is a heterohexamer composed of biotin carboxyl carrier protein (AccB), biotin carboxylase (AccC) and two subunits each of ACCase subunit alpha (AccA) and ACCase subunit beta (AccD). It depends on Zn(2+) as a cofactor.

It is found in the cytoplasm. It carries out the reaction N(6)-carboxybiotinyl-L-lysyl-[protein] + acetyl-CoA = N(6)-biotinyl-L-lysyl-[protein] + malonyl-CoA. Its pathway is lipid metabolism; malonyl-CoA biosynthesis; malonyl-CoA from acetyl-CoA: step 1/1. Its function is as follows. Component of the acetyl coenzyme A carboxylase (ACC) complex. Biotin carboxylase (BC) catalyzes the carboxylation of biotin on its carrier protein (BCCP) and then the CO(2) group is transferred by the transcarboxylase to acetyl-CoA to form malonyl-CoA. This chain is Acetyl-coenzyme A carboxylase carboxyl transferase subunit beta, found in Streptococcus equi subsp. zooepidemicus (strain H70).